Consider the following 186-residue polypeptide: Putative CTD phosphatase-like protein 355R (186 aa).

The 181-residue stretch at E2–L182 folds into the FCP1 homology domain.

It belongs to the IIV-6 355R family.

May function as a phosphatase. The sequence is that of Putative CTD phosphatase-like protein 355R from Aedes vexans (Inland floodwater mosquito).